The following is a 92-amino-acid chain: NELL2-interacting cell ontogeny regulator 1 (92 aa).

The N-terminal stretch at 1-30 (MALPSAWSVMRVVIPFISVLGLLGVRLVGA) is a signal peptide.

This sequence belongs to the NICOL family.

It is found in the secreted. It localises to the cytoplasm. The protein resides in the perinuclear region. In terms of biological role, mRNA-binding protein which interacts with a range of target mRNAs and may promote extracellular matrix production. May function as a component of lumicrine signaling and may play a crucial role in epididymal-mediated sperm maturation and male fertility. The sequence is that of NELL2-interacting cell ontogeny regulator 1 from Gallus gallus (Chicken).